Reading from the N-terminus, the 252-residue chain is Trans-aconitate 2-methyltransferase (252 aa).

This sequence belongs to the methyltransferase superfamily. Tam family.

It is found in the cytoplasm. It carries out the reaction trans-aconitate + S-adenosyl-L-methionine = (E)-3-(methoxycarbonyl)pent-2-enedioate + S-adenosyl-L-homocysteine. Its function is as follows. Catalyzes the S-adenosylmethionine monomethyl esterification of trans-aconitate. The chain is Trans-aconitate 2-methyltransferase from Escherichia coli O139:H28 (strain E24377A / ETEC).